A 163-amino-acid polypeptide reads, in one-letter code: Sperm acrosome membrane-associated protein 3 (163 aa).

An N-terminal signal peptide occupies residues 1–35; it reads MEAGSWAPRRWPRPPGIVLLALASVLSSLLSSGQA. One can recognise a C-type lysozyme domain in the interval 36–163; that stretch reads RVYSRCELAR…LSDWVDGCEL (128 aa). Cystine bridges form between C41–C161, C65–C149, C99–C114, and C110–C128.

It belongs to the glycosyl hydrolase 22 family. In terms of assembly, interacts with ASTL.

It localises to the secreted. In terms of biological role, sperm surface membrane protein that may be involved in sperm-egg plasma membrane adhesion and fusion during fertilization. It could be a potential receptor for the egg oligosaccharide residue N-acetylglucosamine, which is present in the extracellular matrix over the egg plasma membrane. The processed form has no detectable bacteriolytic activity in vitro. In Bos taurus (Bovine), this protein is Sperm acrosome membrane-associated protein 3 (SPACA3).